A 365-amino-acid polypeptide reads, in one-letter code: Aminomethyltransferase (365 aa).

The protein belongs to the GcvT family. The glycine cleavage system is composed of four proteins: P, T, L and H.

It carries out the reaction N(6)-[(R)-S(8)-aminomethyldihydrolipoyl]-L-lysyl-[protein] + (6S)-5,6,7,8-tetrahydrofolate = N(6)-[(R)-dihydrolipoyl]-L-lysyl-[protein] + (6R)-5,10-methylene-5,6,7,8-tetrahydrofolate + NH4(+). In terms of biological role, the glycine cleavage system catalyzes the degradation of glycine. The polypeptide is Aminomethyltransferase (Yersinia pseudotuberculosis serotype O:3 (strain YPIII)).